A 131-amino-acid polypeptide reads, in one-letter code: Phosphoribosyl-AMP cyclohydrolase (131 aa).

Residue D89 coordinates Mg(2+). Position 90 (C90) interacts with Zn(2+). The Mg(2+) site is built by D91 and D93. The Zn(2+) site is built by C106 and C113.

This sequence belongs to the PRA-CH family. Homodimer. Mg(2+) serves as cofactor. The cofactor is Zn(2+).

It is found in the cytoplasm. It catalyses the reaction 1-(5-phospho-beta-D-ribosyl)-5'-AMP + H2O = 1-(5-phospho-beta-D-ribosyl)-5-[(5-phospho-beta-D-ribosylamino)methylideneamino]imidazole-4-carboxamide. Its pathway is amino-acid biosynthesis; L-histidine biosynthesis; L-histidine from 5-phospho-alpha-D-ribose 1-diphosphate: step 3/9. Its function is as follows. Catalyzes the hydrolysis of the adenine ring of phosphoribosyl-AMP. In Bifidobacterium longum (strain DJO10A), this protein is Phosphoribosyl-AMP cyclohydrolase.